The primary structure comprises 505 residues: Deoxyguanosinetriphosphate triphosphohydrolase (505 aa).

Positions 66–273 constitute an HD domain; sequence RLTHSMEVQQ…MEAADDISYC (208 aa).

Belongs to the dGTPase family. Type 1 subfamily. As to quaternary structure, homotetramer. The cofactor is Mg(2+).

The enzyme catalyses dGTP + H2O = 2'-deoxyguanosine + triphosphate + H(+). DGTPase preferentially hydrolyzes dGTP over the other canonical NTPs. The chain is Deoxyguanosinetriphosphate triphosphohydrolase from Escherichia coli O157:H7.